The sequence spans 476 residues: MAVPFVEDWDLVQTLGEGAYGEVQLAVNRVTEEAVAVKIVDMKRAVDCPENIKKEICINKMLNHENVVKFYGHRREGNIQYLFLEYCSGGELFDRIEPDIGMPEPDAQRFFHQLMAGVVYLHGIGITHRDIKPENLLLDERDNLKISDFGLATVFRYNNRERLLNKMCGTLPYVAPELLKRREFHAEPVDVWSCGIVLTAMLAGELPWDQPSDSCQEYSDWKEKKTYLNPWKKIDSAPLALLHKILVENPSARITIPDIKKDRWYNKPLKKGAKRPRVTSGGVSESPSGFSKHIQSNLDFSPVNSASSEENVKYSSSQPEPRTGLSLWDTSPSYIDKLVQGISFSQPTCPDHMLLNSQLLGTPGSSQNPWQRLVKRMTRFFTKLDADKSYQCLKETCEKLGYQWKKSCMNQVTISTTDRRNNKLIFKVNLLEMDDKILVDFRLSKGDGLEFKRHFLKIKGKLIDIVSSQKIWLPAT.

Residues Met-1 to Tyr-265 are interaction with CLSPN. Residues Trp-9–Tyr-265 enclose the Protein kinase domain. ATP contacts are provided by residues Leu-15–Val-23 and Lys-38. Asp-130 (proton acceptor) is an active-site residue. Lys-132 participates in a covalent cross-link: Glycyl lysine isopeptide (Lys-Gly) (interchain with G-Cter in ubiquitin). A disordered region spans residues Lys-270–Leu-327. Phosphoserine is present on residues Ser-280, Ser-286, Ser-296, and Ser-301. The span at Gly-281–Glu-320 shows a compositional bias: polar residues. A Phosphoserine; by ATM and ATR modification is found at Ser-317. Ser-331 bears the Phosphoserine mark. Phosphoserine; by ATM and ATR is present on Ser-345. Residues Gln-391–Thr-476 form an autoinhibitory region region. Lys-436 is covalently cross-linked (Glycyl lysine isopeptide (Lys-Gly) (interchain with G-Cter in ubiquitin)). Phosphoserine is present on residues Ser-467 and Ser-468.

Belongs to the protein kinase superfamily. CAMK Ser/Thr protein kinase family. NIM1 subfamily. In terms of assembly, interacts (phosphorylated by ATR) with RAD51. Interacts with and phosphorylates CLSPN, an adapter protein that regulates the ATR-dependent phosphorylation of CHEK1. Interacts with BRCA1. Interacts with and phosphorylates CDC25A, CDC25B and CDC25C. Interacts with FBXO6, which regulates CHEK1. Interacts with PPM1D, which regulates CHEK1 through dephosphorylation. Interacts with TIMELESS; DNA damage-dependent. Interacts with FEM1B; activates CHEK1 in response to stress. Interacts with TLK1. Interacts with XPO1 and YWHAZ. Interacts with CDK5RAP3; antagonizes CHEK1. As to quaternary structure, isoform 1 associates with isoform 2, the interaction is disrupted upon phosphorylation by ATR. Post-translationally, phosphorylated by ATR in a RAD17-dependent manner in response to ultraviolet irradiation and inhibition of DNA replication. Phosphorylated by ATM in response to ionizing irradiation. ATM and ATR can both phosphorylate Ser-317 and Ser-345 and this results in enhanced kinase activity. Phosphorylation at Ser-345 induces a change in the conformation of the protein, activates the kinase activity and is a prerequisite for interaction with FBXO6 and subsequent ubiquitination at Lys-436. Phosphorylation at Ser-345 also increases binding to 14-3-3 proteins and promotes nuclear retention. Conversely, dephosphorylation at Ser-345 by PPM1D may contribute to exit from checkpoint mediated cell cycle arrest. Phosphorylation at Ser-280 by AKT1/PKB, may promote mono and/or diubiquitination. Also phosphorylated at undefined residues during mitotic arrest, resulting in decreased activity. In terms of processing, ubiquitinated. Mono or diubiquitination promotes nuclear exclusion. The activated form (phosphorylated on Ser-345) is polyubiquitinated at Lys-436 by some SCF-type E3 ubiquitin ligase complex containing FBXO6 promoting its degradation. Ubiquitination and degradation are required to terminate the checkpoint and ensure that activated CHEK1 does not accumulate as cells progress through S phase, when replication forks encounter transient impediments during normal DNA replication. 'Lys-63'-mediated ubiquitination by TRAF4 at Lys-132 activates cell cycle arrest and activation of DNA repair. Proteolytically cleaved at the C-terminus by SPRTN during normal DNA replication, thereby promoting CHEK1 removal from chromatin and activating the protein kinase activity. As to expression, expressed ubiquitously with the most abundant expression in thymus, testis, small intestine and colon.

The protein localises to the nucleus. It is found in the chromosome. Its subcellular location is the cytoplasm. It localises to the cytoskeleton. The protein resides in the microtubule organizing center. The protein localises to the centrosome. The catalysed reaction is L-seryl-[protein] + ATP = O-phospho-L-seryl-[protein] + ADP + H(+). It carries out the reaction L-threonyl-[protein] + ATP = O-phospho-L-threonyl-[protein] + ADP + H(+). With respect to regulation, activated through phosphorylation predominantly by ATR but also by ATM in response to DNA damage or inhibition of DNA replication. Activation is modulated by several mediators including CLSPN, BRCA1 and FEM1B. Proteolytic cleavage at the C-terminus by SPRTN during normal DNA replication activates the protein kinase activity. Its function is as follows. Serine/threonine-protein kinase which is required for checkpoint-mediated cell cycle arrest and activation of DNA repair in response to the presence of DNA damage or unreplicated DNA. May also negatively regulate cell cycle progression during unperturbed cell cycles. This regulation is achieved by a number of mechanisms that together help to preserve the integrity of the genome. Recognizes the substrate consensus sequence [R-X-X-S/T]. Binds to and phosphorylates CDC25A, CDC25B and CDC25C. Phosphorylation of CDC25A at 'Ser-178' and 'Thr-507' and phosphorylation of CDC25C at 'Ser-216' creates binding sites for 14-3-3 proteins which inhibit CDC25A and CDC25C. Phosphorylation of CDC25A at 'Ser-76', 'Ser-124', 'Ser-178', 'Ser-279' and 'Ser-293' promotes proteolysis of CDC25A. Phosphorylation of CDC25A at 'Ser-76' primes the protein for subsequent phosphorylation at 'Ser-79', 'Ser-82' and 'Ser-88' by NEK11, which is required for polyubiquitination and degradation of CDCD25A. Inhibition of CDC25 leads to increased inhibitory tyrosine phosphorylation of CDK-cyclin complexes and blocks cell cycle progression. Also phosphorylates NEK6. Binds to and phosphorylates RAD51 at 'Thr-309', which promotes the release of RAD51 from BRCA2 and enhances the association of RAD51 with chromatin, thereby promoting DNA repair by homologous recombination. Phosphorylates multiple sites within the C-terminus of TP53, which promotes activation of TP53 by acetylation and promotes cell cycle arrest and suppression of cellular proliferation. Also promotes repair of DNA cross-links through phosphorylation of FANCE. Binds to and phosphorylates TLK1 at 'Ser-743', which prevents the TLK1-dependent phosphorylation of the chromatin assembly factor ASF1A. This may enhance chromatin assembly both in the presence or absence of DNA damage. May also play a role in replication fork maintenance through regulation of PCNA. May regulate the transcription of genes that regulate cell-cycle progression through the phosphorylation of histones. Phosphorylates histone H3.1 (to form H3T11ph), which leads to epigenetic inhibition of a subset of genes. May also phosphorylate RB1 to promote its interaction with the E2F family of transcription factors and subsequent cell cycle arrest. Phosphorylates SPRTN, promoting SPRTN recruitment to chromatin. Reduces replication stress and activates the G2/M checkpoint, by phosphorylating and inactivating PABIR1/FAM122A and promoting the serine/threonine-protein phosphatase 2A-mediated dephosphorylation and stabilization of WEE1 levels and activity. Endogenous repressor of isoform 1, interacts with, and antagonizes CHK1 to promote the S to G2/M phase transition. This Homo sapiens (Human) protein is Serine/threonine-protein kinase Chk1 (CHEK1).